The sequence spans 518 residues: Ribonuclease Y (518 aa).

The chain crosses the membrane as a helical span at residues V2–I22. The segment at Q91–A119 is disordered. A KH domain is found at T208 to L268. In terms of domain architecture, HD spans V334–A427.

This sequence belongs to the RNase Y family.

It is found in the cell membrane. In terms of biological role, endoribonuclease that initiates mRNA decay. The protein is Ribonuclease Y of Enterococcus faecalis (strain ATCC 700802 / V583).